The sequence spans 1384 residues: Protein Gawky (1384 aa).

Disordered regions lie at residues 1–99 (MREA…VWTG), 148–227 (NGSS…DPRG), 263–335 (TAST…DDGT), and 447–501 (VGAP…SGWS). The interval 1–205 (MREALFSQDG…HRGGNGSGAT (205 aa)) is required for interaction with AGO1. 2 sufficient for miRNA-mediated silencing regions span residues 1–605 (MREA…SLGS) and 605–830 (SYAD…SVHL). Polar residues predominate over residues 15–24 (HVNQDTNWEV). Low complexity predominate over residues 150 to 171 (SSNITGSSGVATGSSGNSSNAG). Residues 205 to 490 (TSSDPRDIRM…GVSWGNKQSK (286 aa)) are minimal N-terminal region required for miRNA-mediated silencing. Positions 208 to 225 (DPRDIRMIDPRDPIRGDP) are enriched in basic and acidic residues. Composition is skewed to polar residues over residues 449 to 475 (APSSGSVSSNNWVDDKSNSTLAQNSWS) and 485 to 501 (GNKQSKPPSNSASSGWS). Residues 547-588 (IIKQSKQYRILVENGFKKEDVERALVIANMNIEEAADMLRAN) enclose the UBA domain. Disordered stretches follow at residues 607 to 626 (ADHNSSTSSGGFAGRYPVNS), 809 to 841 (QNMQPTSQQQQPQQQQLPSVHLSNSGNDYLRGH), 889 to 942 (TEFS…NKDW), 962 to 1022 (EPGK…LSSS), 1052 to 1102 (TSPL…GVQT), 1188 to 1221 (SENEVQSIMQHLPQTPSSTSSSGTSGGNVGGVGT), and 1318 to 1368 (GTAN…PSGR). The segment covering 809–826 (QNMQPTSQQQQPQQQQLP) has biased composition (low complexity). Residues 862–1115 (YQGASNQQSR…NWTGGNTTWG (254 aa)) form a not required for interaction with AGO1 or miRNAs or for localization to P-bodies but necessary for miRNA-mediated silencing and for interaction with pAbp region. The segment covering 898-924 (TKQNLTANTSNINSLGLQNDSTWSTGR) has biased composition (polar residues). Positions 940 to 1215 (KDWSVAQPTS…TSSSGTSGGN (276 aa)) are sufficient for miRNA-mediated silencing. Residues 1010-1022 (SPTDLPPLSLSSS) are compositionally biased toward low complexity. Residues 1052–1061 (TSPLNKSSSR) show a composition bias toward polar residues. Residues 1068–1084 (TANSNKSANSNASTPTT) show a composition bias toward low complexity. One can recognise an RRM domain in the interval 1117 to 1189 (SWLLLKNLTA…TTIFAESPSE (73 aa)). Polar residues predominate over residues 1188–1203 (SENEVQSIMQHLPQTP). Residues 1200-1384 (PQTPSSTSSS…ISLVYSIVDD (185 aa)) form a not required for interaction with AGO1 or miRNAs or for localization to P-bodies but necessary for miRNA-mediated silencing, dissociation from AGO1 and miRNAs and interaction with pAbp region. Residues 1211 to 1220 (TSGGNVGGVG) are compositionally biased toward gly residues. Residues 1318–1349 (GTANSSGSKSSANNLASGQSSASNLTNSTNST) are compositionally biased toward low complexity. The span at 1350–1365 (WRQTSQNQALQSQSRP) shows a compositional bias: polar residues.

The protein belongs to the GW182 family. In terms of assembly, component of the miRNA-directed RNA-induced silencing complex (miRISC), composed of at least AGO1 and gw, which bind mature miRNAs and targets the selective destruction of homologous RNAs. Interacts (via N-terminal region) with AGO1 (via Piwi domain); the interaction is essential for localization of AGO1 in P-bodies and for miRNA-mediated silencing. Interacts with pAbp/PABPC1; this interaction interferes with the binding of pAbp to eIF4G and is required for miRNA-mediated silencing. Interacts with CCR4-NOT complex members Not1, Rga/NOT2, twin/CCR4, Pop2 and NOT3/5 and with PAN complex members CG8232/PAN2 and CG11486/PAN3.

It is found in the cytoplasm. It localises to the P-body. Required for gene silencing mediated by micro-RNAs (miRNAs). Silences both polyadenylated and deadenylated mRNAs. Required for miRNA-mediated translational repression and mRNA decay. Not required for miRNA target recognition. Necessary to initiate but not to maintain silencing. Promotes mRNA deadenylation through the recruitment of the CCR4-NOT and PAN complexes and promotes decapping by the DCP1-DCP2 complex. Dissociates from silenced mRNAs after deadenylation. Required for completion of nuclear divisions during early embryonic development. This is Protein Gawky from Drosophila melanogaster (Fruit fly).